The sequence spans 1192 residues: DNA ligase 1 (1192 aa).

Disordered regions lie at residues 29 to 257 and 280 to 517; these read ELNK…KEKE and EKEL…KSTQ. Over residues 42–56 the composition is skewed to basic and acidic residues; that stretch reads EAVVKEKVEKKEKKE. Acidic residues predominate over residues 70 to 113; that stretch reads EEEEEEQEEQDGEEEQEEEEEYQQQDEEIEEDINGEEEMELDEN. Over residues 141-155 the composition is skewed to basic and acidic residues; that stretch reads KTIENKETKKPEKQS. The span at 172 to 198 shows a compositional bias: acidic residues; the sequence is DDEEDEEDENKTDDNDLDDMLDDDSDN. 2 stretches are compositionally biased toward basic and acidic residues: residues 199–257 and 280–368; these read EKDS…KEKE and EKEL…RANA. Composition is skewed to low complexity over residues 371–382 and 410–434; these read KSSVPTSTSKNS and STTT…ISSP. Over residues 435–467 the composition is skewed to basic and acidic residues; that stretch reads SKKEEKEVITSKKQVEATKVEVKKEKEKEKEKE. Acidic residues predominate over residues 468–511; it reads KEDDEEEEEEEEDDDEKLEDIDEEEYEEEEEEDEEGISENEEEE. The interaction with target DNA stretch occupies residues 724–733; the sequence is KLRIGLAERS. Residue E842 coordinates ATP. K844 (N6-AMP-lysine intermediate) is an active-site residue. Residues R849 and R865 each contribute to the ATP site. A Mg(2+)-binding site is contributed by E897. Residues 918–920 form an interaction with target DNA region; it reads ARK. E996 provides a ligand contact to Mg(2+). ATP is bound by residues K1001, R1014, and K1020. The disordered stretch occupies residues 1157 to 1192; the sequence is DKSPEDATSSDQVVDMYQNQKINSQSSKINEKDEDY. Polar residues predominate over residues 1162–1184; that stretch reads DATSSDQVVDMYQNQKINSQSSK.

This sequence belongs to the ATP-dependent DNA ligase family. Requires Mg(2+) as cofactor.

Its subcellular location is the nucleus. It carries out the reaction ATP + (deoxyribonucleotide)n-3'-hydroxyl + 5'-phospho-(deoxyribonucleotide)m = (deoxyribonucleotide)n+m + AMP + diphosphate.. Functionally, DNA ligase that seals nicks in double-stranded DNA during DNA replication, DNA recombination and DNA repair. This chain is DNA ligase 1 (lig1), found in Dictyostelium discoideum (Social amoeba).